A 217-amino-acid polypeptide reads, in one-letter code: Putative N-acetylmuramoyl-L-alanine amidase (217 aa).

One can recognise a MurNAc-LAA domain in the interval 3–206; it reads IAIDAGHGGQ…ISKSISIALK (204 aa).

The protein belongs to the N-acetylmuramoyl-L-alanine amidase 3 family.

The protein resides in the secreted. It catalyses the reaction Hydrolyzes the link between N-acetylmuramoyl residues and L-amino acid residues in certain cell-wall glycopeptides.. In terms of biological role, cell-wall hydrolase involved in septum cleavage during cell division. This Buchnera aphidicola subsp. Baizongia pistaciae (strain Bp) protein is Putative N-acetylmuramoyl-L-alanine amidase (amiB).